Reading from the N-terminus, the 242-residue chain is Small ribosomal subunit protein uS2 (242 aa).

Belongs to the universal ribosomal protein uS2 family.

The protein is Small ribosomal subunit protein uS2 of Photobacterium profundum (strain SS9).